Consider the following 466-residue polypeptide: MTNPLWGGRFTTSSNDIMKKINESISFDQALYEEDILTSIAHCKMLVNQKIISKYEGQLIIHGLEVIQKQIESGNFEFSTDLEDIHMNIEYSLKKMIGNIAGKLHTARSRNDQIATDLKLWIRKSIKKLEQQLHKLQSTLLNIAENHYDTIMPGFTHLQIAQPVTLGHHLMAYFEMLKRDRSRWQDLYKRMNQCPAGSAALAGTSFPIDRHFIAQELGFDSPTENSIDAVSDRDYIIEFLSNASICIMHLSRLAEEIILWCSYNFKFITLSDNITTGSSIMPQKKNPDAAELIRGKTGRIFSSLNHILIVMKGLPLAYSKDMQEDKEPLFDAERNLILCIEAMNSMLNNITINSENMLKAAEHDYSTATDLADWLVKHINLSFRESHEITGQIVKLAEHNKCKIHELTLIQLQKIIPSITEDVFSVLSAKNSVTSRTSYGGTAPINVLQAIKNGRIYLENTDSLTQ.

It belongs to the lyase 1 family. Argininosuccinate lyase subfamily.

It localises to the cytoplasm. It catalyses the reaction 2-(N(omega)-L-arginino)succinate = fumarate + L-arginine. The protein operates within amino-acid biosynthesis; L-arginine biosynthesis; L-arginine from L-ornithine and carbamoyl phosphate: step 3/3. The chain is Argininosuccinate lyase from Ehrlichia ruminantium (strain Gardel).